A 75-amino-acid polypeptide reads, in one-letter code: Cruzioseptin-7 (75 aa).

The first 22 residues, 1 to 22, serve as a signal peptide directing secretion; sequence MAKLKKSLFLVLFLGLVSLSIC. Residues 23–43 constitute a propeptide that is removed on maturation; the sequence is EEEKREEENEEVQEDDDQSEE. The tract at residues 25 to 44 is disordered; it reads EKREEENEEVQEDDDQSEEK. The span at 30–41 shows a compositional bias: acidic residues; it reads ENEEVQEDDDQS.

In terms of tissue distribution, expressed by the skin glands.

It localises to the secreted. In terms of biological role, has antimicrobial activity. This chain is Cruzioseptin-7, found in Cruziohyla calcarifer (Splendid leaf frog).